The following is a 382-amino-acid chain: MRLERALRARQLIPLAAIWLLVGCGKQETVESTAVPPEVGVYTVKAQALTLTTDLPGRTSAYRVSEVRPQASGILQKRMFVEGAEVKQGEQLYQIDPRTYEALLARAEASLLTAQNLARRYERLLDTNAISQQQYDDAMATWKQAQAEAQMARINMQYTKVLAPITGRIGRSAVTEGALVTNGQAQELATVTQLDPIYVDVNQPITRLLGLKRALESGRLQRVGDNQAQVSLTLDDGTPYPLKGVLKFSEVSVAPSTGSVTLRAEFPNPDHKLLPGMFVHALLNEGEQQAAILVPHQAVGRDARGVPTVWVVKPDNTVESREVQTLQTVGNAWLLGAGINDGERVITEGVQLARSGITVKPVAAKNVKLMSEFGSQVQAQAH.

Residues methionine 1–glycine 23 form the signal peptide. Cysteine 24 is lipidated: N-palmitoyl cysteine. Residue cysteine 24 is the site of S-diacylglycerol cysteine attachment. Residues tyrosine 100–aspartate 136 adopt a coiled-coil conformation.

It belongs to the membrane fusion protein (MFP) (TC 8.A.1) family.

It localises to the cell inner membrane. The periplasmic linker protein component of an inducible organic solvent efflux pump. Involved in export of toluene and styrene but not of m-xylene, propylbenzene or ethylbenzene. Is not involved in antibiotic or AMP efflux. In Pseudomonas putida (strain DOT-T1E), this protein is Toluene efflux pump periplasmic linker protein TtgD (ttgD).